The sequence spans 178 residues: Methylmalonyl-CoA epimerase, mitochondrial (178 aa).

A mitochondrion-targeting transit peptide spans 1-38; it reads MRRVVKAAALAAGATGLFSRVQTSVAIGRSFSTPQSQF. One can recognise a VOC domain in the interval 49-178; it reads RLNHVAVAVP…GGVLVELEQA (130 aa). Residue His52 coordinates Co(2+). Lys116 carries the N6-succinyllysine modification. His124 lines the Co(2+) pocket. Residue Lys152 is modified to N6-acetyllysine; alternate. Lys152 is modified (N6-succinyllysine; alternate). Co(2+) is bound at residue Glu174.

It belongs to the methylmalonyl-CoA epimerase family.

The protein localises to the mitochondrion. The catalysed reaction is (R)-methylmalonyl-CoA = (S)-methylmalonyl-CoA. Its function is as follows. Methylmalonyl-CoA epimerase involved in propionyl-CoA metabolism. This chain is Methylmalonyl-CoA epimerase, mitochondrial, found in Mus musculus (Mouse).